Consider the following 109-residue polypeptide: Nucleoid-associated protein swp_1717 (109 aa).

Positions 88-109 are disordered; it reads QKDKMAEVTGGMQLPPGMKMPF.

The protein belongs to the YbaB/EbfC family. As to quaternary structure, homodimer.

It is found in the cytoplasm. The protein localises to the nucleoid. In terms of biological role, binds to DNA and alters its conformation. May be involved in regulation of gene expression, nucleoid organization and DNA protection. The sequence is that of Nucleoid-associated protein swp_1717 from Shewanella piezotolerans (strain WP3 / JCM 13877).